The sequence spans 264 residues: Triosephosphate isomerase (264 aa).

13-15 (NWK) provides a ligand contact to substrate. Catalysis depends on His106, which acts as the Electrophile. Glu179 functions as the Proton acceptor in the catalytic mechanism. Residues Gly185, Ser223, and 244–245 (GG) contribute to the substrate site.

The protein belongs to the triosephosphate isomerase family. As to quaternary structure, homodimer.

The protein resides in the cytoplasm. It catalyses the reaction D-glyceraldehyde 3-phosphate = dihydroxyacetone phosphate. Its pathway is carbohydrate biosynthesis; gluconeogenesis. It functions in the pathway carbohydrate degradation; glycolysis; D-glyceraldehyde 3-phosphate from glycerone phosphate: step 1/1. Functionally, involved in the gluconeogenesis. Catalyzes stereospecifically the conversion of dihydroxyacetone phosphate (DHAP) to D-glyceraldehyde-3-phosphate (G3P). This Acinetobacter baumannii (strain AB0057) protein is Triosephosphate isomerase.